Reading from the N-terminus, the 175-residue chain is SsrA-binding protein (175 aa).

Disordered regions lie at residues 1–29 (MTRN…ERDA) and 152–175 (KRET…SRKS).

The protein belongs to the SmpB family.

It is found in the cytoplasm. Required for rescue of stalled ribosomes mediated by trans-translation. Binds to transfer-messenger RNA (tmRNA), required for stable association of tmRNA with ribosomes. tmRNA and SmpB together mimic tRNA shape, replacing the anticodon stem-loop with SmpB. tmRNA is encoded by the ssrA gene; the 2 termini fold to resemble tRNA(Ala) and it encodes a 'tag peptide', a short internal open reading frame. During trans-translation Ala-aminoacylated tmRNA acts like a tRNA, entering the A-site of stalled ribosomes, displacing the stalled mRNA. The ribosome then switches to translate the ORF on the tmRNA; the nascent peptide is terminated with the 'tag peptide' encoded by the tmRNA and targeted for degradation. The ribosome is freed to recommence translation, which seems to be the essential function of trans-translation. This Koribacter versatilis (strain Ellin345) protein is SsrA-binding protein.